A 123-amino-acid chain; its full sequence is UPF0102 protein PSEEN4497 (123 aa).

The protein belongs to the UPF0102 family.

The protein is UPF0102 protein PSEEN4497 of Pseudomonas entomophila (strain L48).